The primary structure comprises 371 residues: tRNA (guanine(26)-N(2))-dimethyltransferase (371 aa).

Residues 4–368 form the Trm1 methyltransferase domain; sequence IEVTEGRTTF…APLDAIAAAL (365 aa). The S-adenosyl-L-methionine site is built by Arg-41, Arg-66, Asp-82, Asp-108, and Ala-109. 4 residues coordinate Zn(2+): Cys-237, Cys-240, Cys-256, and Cys-259.

Belongs to the class I-like SAM-binding methyltransferase superfamily. Trm1 family.

The enzyme catalyses guanosine(26) in tRNA + 2 S-adenosyl-L-methionine = N(2)-dimethylguanosine(26) in tRNA + 2 S-adenosyl-L-homocysteine + 2 H(+). In terms of biological role, dimethylates a single guanine residue at position 26 of a number of tRNAs using S-adenosyl-L-methionine as donor of the methyl groups. The protein is tRNA (guanine(26)-N(2))-dimethyltransferase of Methanosphaerula palustris (strain ATCC BAA-1556 / DSM 19958 / E1-9c).